Reading from the N-terminus, the 293-residue chain is Elongation factor Ts (293 aa).

The tract at residues 81–84 (TDFV) is involved in Mg(2+) ion dislocation from EF-Tu.

Belongs to the EF-Ts family.

The protein resides in the cytoplasm. Functionally, associates with the EF-Tu.GDP complex and induces the exchange of GDP to GTP. It remains bound to the aminoacyl-tRNA.EF-Tu.GTP complex up to the GTP hydrolysis stage on the ribosome. In Teredinibacter turnerae (strain ATCC 39867 / T7901), this protein is Elongation factor Ts.